The chain runs to 137 residues: Ribosome-binding factor A (137 aa).

The protein belongs to the RbfA family. As to quaternary structure, monomer. Binds 30S ribosomal subunits, but not 50S ribosomal subunits or 70S ribosomes.

It localises to the cytoplasm. In terms of biological role, one of several proteins that assist in the late maturation steps of the functional core of the 30S ribosomal subunit. Associates with free 30S ribosomal subunits (but not with 30S subunits that are part of 70S ribosomes or polysomes). Required for efficient processing of 16S rRNA. May interact with the 5'-terminal helix region of 16S rRNA. This Synechococcus sp. (strain ATCC 27144 / PCC 6301 / SAUG 1402/1) (Anacystis nidulans) protein is Ribosome-binding factor A.